We begin with the raw amino-acid sequence, 319 residues long: 3-oxoacyl-[acyl-carrier-protein] reductase, chloroplastic (319 aa).

Residues M1–K57 constitute a chloroplast transit peptide. A58 carries the N-acetylalanine modification. I81–V105 serves as a coordination point for NADP(+). Residue S213 coordinates substrate. Y226 acts as the Proton acceptor in catalysis.

The protein belongs to the short-chain dehydrogenases/reductases (SDR) family. Homotetramer.

The protein resides in the plastid. The protein localises to the chloroplast. It carries out the reaction a (3R)-hydroxyacyl-[ACP] + NADP(+) = a 3-oxoacyl-[ACP] + NADPH + H(+). Its pathway is lipid metabolism; fatty acid biosynthesis. The chain is 3-oxoacyl-[acyl-carrier-protein] reductase, chloroplastic from Arabidopsis thaliana (Mouse-ear cress).